The chain runs to 406 residues: MMEGLDDGPDFLSEEDRGLKAINVDLQSDAALQVDISDALSERDKVKFTVHTKSSLPNFKQNEFSVVRQHEEFIWLHDSFVENEDYAGYIIPPAPPRPDFDASREKLQKLGEGEGSMTKEEFTKMKQELEAEYLAIFKKTVAMHEVFLCRVAAHPILRRDLNFHVFLEYNQDLSVRGKNKKEKLEDFFKNMVKSADGVIVSGVKDVDDFFEHERTFLLEYHNRVKDASAKSDRMTRSHKSAADDYNRIGSSLYALGTQDSTDICKFFLKVSELFDKTRKIEARVSADEDLKLSDLLKYYLRESQAAKDLLYRRSRSLVDYENANKALDKARAKNKDVLQAETSQQLCCQKFEKISESAKQELIDFKTRRVAAFRKNLVELAELELKHAKGNLQLLQNCLAVLNGDT.

M1 is subject to N-acetylmethionine. An N-acetylmethionine; in Sorting nexin-6, N-terminally processed modification is found at M2. The tract at residues 2 to 179 (MEGLDDGPDF…NQDLSVRGKN (178 aa)) is interaction with PIM1. The region spanning 26–173 (LQSDAALQVD…HVFLEYNQDL (148 aa)) is the PX domain. A 1,2-diacyl-sn-glycero-3-phospho-(1D-myo-inositol-4,5-bisphosphate) contacts are provided by residues 41–47 (SERDKVK), 100–106 (FDASREK), and 114–117 (EGSM). A phosphoserine mark is found at S116 and S194. Positions 182 to 199 (EKLEDFFKNMVKSADGVI) are membrane-binding amphipathic helix. Residues 203–406 (VKDVDDFFEH…NCLAVLNGDT (204 aa)) enclose the BAR domain.

It belongs to the sorting nexin family. Forms heterodimers with BAR domain-containing sorting nexins SNX1 and SNX2. The heterodimers are proposed to self-assemble into helical arrays on the membrane to stabilize and expand local membrane curvature underlying endosomal tubule formation. Thought to be a component of the originally described retromer complex (also called SNX-BAR retromer) which is a pentamer containing the heterotrimeric retromer cargo-selective complex (CSC), also described as vacuolar protein sorting subcomplex (VPS), and a heterodimeric membrane-deforming subcomplex formed between SNX1 or SNX2 and SNX5 or SNX6 (also called SNX-BAR subcomplex); the respective CSC and SNX-BAR subcomplexes associate with low affinity. Interacts with SNX1, SNX2, VPS26A, VPS29, VPS35, CDKN1B, TGFB receptors, BACE1, BRMS1, PIP5K1C isoform 3. Interacts with DCTN1; the association with DCTN1 is involved in movement of retromer-c ontaining vesicles toward the TGN. Interacts with CDKN1B and GIT1. Interacts with PIM1; translocating SNX6 to the nucleus. In vitro phosphorylated by PIM1; not affecting PIM1-dependent nuclear translocation.

The protein localises to the early endosome. It is found in the early endosome membrane. It localises to the cytoplasmic vesicle. The protein resides in the cytoplasm. Its subcellular location is the nucleus. Involved in several stages of intracellular trafficking. Interacts with membranes phosphatidylinositol 3,4-bisphosphate and/or phosphatidylinositol 4,5-bisphosphate. Acts in part as component of the retromer membrane-deforming SNX-BAR subcomplex. The SNX-BAR retromer mediates retrograde transport of cargo proteins from endosomes to the trans-Golgi network (TGN) and is involved in endosome-to-plasma membrane transport for cargo protein recycling. The SNX-BAR subcomplex functions to deform the donor membrane into a tubular profile called endosome-to-TGN transport carrier (ETC). Does not have in vitro vesicle-to-membrane remodeling activity. Involved in retrograde endosome-to-TGN transport of lysosomal enzyme receptor IGF2R. May function as link between transport vesicles and dynactin. Negatively regulates retrograde transport of BACE1 from the cell surface to the trans-Golgi network. Involved in E-cadherin sorting and degradation; inhibits PIP5K1C isoform 3-mediated E-cadherin degradation. In association with GIT1 involved in EGFR degradation. Promotes lysosomal degradation of CDKN1B. May contribute to transcription regulation. The polypeptide is Sorting nexin-6 (SNX6) (Homo sapiens (Human)).